Consider the following 148-residue polypeptide: Calcium-permeable cation-selective channel WeiTsing (148 aa).

The Cytoplasmic portion of the chain corresponds to 1-25; that stretch reads METVSAVNQTLPISGGEPVKFTTYS. A helical transmembrane segment spans residues 26–46; it reads AAVHKVLVMINAGILGLLQLV. At 47 to 51 the chain is on the lumenal side; sequence SQQSS. A helical membrane pass occupies residues 52-72; sequence VLETHKAAFLCFCVFILFYAV. Residues 73-90 lie on the Cytoplasmic side of the membrane; it reads LRVREAMDVRLQPGLVPR. The helical transmembrane segment at 91–110 threads the bilayer; that stretch reads LIGHGSHLFGGLAALVLVSV. The Lumenal portion of the chain corresponds to 111 to 116; the sequence is VSTAFS. A helical transmembrane segment spans residues 117 to 133; it reads IVLFLLWFIWLSAVVYL. The Cytoplasmic segment spans residues 134 to 148; that stretch reads ETNKPSACPPQLPPV.

As to quaternary structure, forms pentamers with a central pore to produce an ion channel.

Its subcellular location is the endoplasmic reticulum membrane. The enzyme catalyses Ca(2+)(in) = Ca(2+)(out). It catalyses the reaction Na(+)(in) = Na(+)(out). Calcium-permeable cation-selective channel conferring a broad-spectrum clubroot resistance by supporting cytosolic Ca(2+) increase in root pericycle cells. Triggers immunity toward fungal pathogens such as Plasmodiophora brassicae (Pb) and induces defenses. Also permeable to sodium ion Na(+) and possibly other cations. The protein is Calcium-permeable cation-selective channel WeiTsing of Arabidopsis thaliana (Mouse-ear cress).